A 243-amino-acid polypeptide reads, in one-letter code: Phosphoribosylaminoimidazole-succinocarboxamide synthase (243 aa).

It belongs to the SAICAR synthetase family.

The catalysed reaction is 5-amino-1-(5-phospho-D-ribosyl)imidazole-4-carboxylate + L-aspartate + ATP = (2S)-2-[5-amino-1-(5-phospho-beta-D-ribosyl)imidazole-4-carboxamido]succinate + ADP + phosphate + 2 H(+). It participates in purine metabolism; IMP biosynthesis via de novo pathway; 5-amino-1-(5-phospho-D-ribosyl)imidazole-4-carboxamide from 5-amino-1-(5-phospho-D-ribosyl)imidazole-4-carboxylate: step 1/2. In Methanobrevibacter smithii (strain ATCC 35061 / DSM 861 / OCM 144 / PS), this protein is Phosphoribosylaminoimidazole-succinocarboxamide synthase.